A 795-amino-acid polypeptide reads, in one-letter code: MLRHMHRSGVQPFRQRLLPWVQSIAVPRSNRVQPSAIRHVRSWSNIPFITVPLSRAHGKPFAHRSELKHAKRIVVKLGSAVVTRGDECGLALGRLASIVEQVSVLQNQGREMMLVTSGAVAFGKQRLRHEILLSQSVRQALHSGQNHLKEMAIPVLEARACAAAGQSGLMALYEAMFTQYSICAAQILVTNLDFHDEQKRRNLNGTLHELLRMNIVPIVNTNDAVVPPAEPNSDLQGVNVISVKDNDSLAARLAVEMKTDLLIVLSDVEGLFDSPPGSDDAKLIDIFYPGDQQSVTFGTKSRVGLGGMEAKVKAALWALQGGTSVVIANGTHPKVSGHVITDIVEGKKVGTFFSEVKPAGPTVEQQGEMARSGGRMLATLEPEQRAEIINHLADLLTDQREEILLANKKDLEEAEGRLASPLLKRLSLSTSKLNSLAIGLRQIAASSQESVGRVLRRTRIAKNLELEQVTVPIGVLLVIFESRPDCLPQVAALAIASGNGLLLKGGKEAAHSNRILHLLTQEALSIHGVKEAIQLVNTREEVEDLCRLDKIIDLIIPRGSSQLVRDIQKAAKGIPVMGHSEGICHMYVDSEASVDKVTRLVRDSKCEYPAACNALETLLIHRDLLRTPLFDQIIDMLRVEQVKIHAGPKFASYLTFSPSEVKSLRTEYGDLEVCIEVVDSVQEAIDHIHKYGSSHTDVIVTENEKTAEFFLQHVDSACVFWNASTRFSDGYRFGLGAEVGISTSRIHARGPVGLEGLLTTKWLLRGQDHVVSDFSEHGSLKYLHENLPVPQRNFS.

Residues 1–361 (MLRHMHRSGV…FFSEVKPAGP (361 aa)) form a glutamate 5-kinase region. 3 residues coordinate substrate: Ser-117, Asp-223, and Asn-246. ATP is bound by residues 266 to 267 (SD) and 305 to 311 (LGGMEAK). Residues Lys-311, Lys-347, and Lys-550 each carry the N6-succinyllysine modification. The tract at residues 362–795 (TVEQQGEMAR…NLPVPQRNFS (434 aa)) is gamma-glutamyl phosphate reductase.

It in the N-terminal section; belongs to the glutamate 5-kinase family. This sequence in the C-terminal section; belongs to the gamma-glutamyl phosphate reductase family. As to quaternary structure, can form homodimers/multimers.

The protein resides in the mitochondrion matrix. The catalysed reaction is L-glutamate + ATP = L-glutamyl 5-phosphate + ADP. It carries out the reaction L-glutamate 5-semialdehyde + phosphate + NADP(+) = L-glutamyl 5-phosphate + NADPH + H(+). The protein operates within amino-acid biosynthesis; L-proline biosynthesis; L-glutamate 5-semialdehyde from L-glutamate: step 1/2. It participates in amino-acid biosynthesis; L-proline biosynthesis; L-glutamate 5-semialdehyde from L-glutamate: step 2/2. Its activity is regulated as follows. Isoform Short: Inhibited by L-ornithine with a Ki of approximately 0.25 mm. Isoform Long: Insensitive to ornithine inhibition. Thus, the two amino acid insert in the long isoform abolishes feedback inhibition of P5CS activity by L-ornithine. Functionally, bifunctional enzyme that converts glutamate to glutamate 5-semialdehyde, an intermediate in the biosynthesis of proline, ornithine and arginine. The polypeptide is Delta-1-pyrroline-5-carboxylate synthase (Aldh18a1) (Mus musculus (Mouse)).